Reading from the N-terminus, the 499-residue chain is MTIIDTRTPDAKRLIPGATGDWEIIIGLEVHAQVISEAKLFSGASTAFGAAPNANVSLVDAAMPGMLPVINEECVKQAIRTGLGLKAQINHKSVFDRKNYFYPDLPQGYQISQFKQPIVGEGTVIVSVGPDRQGEFEDIEVGIERLHLEQDAGKSMHDQHPTMSYVDLNRSGVALMEIVSKPDLRSGDEAKAYVTKLRTIMRYLGTCDGNMDEGSLRADVNVSVRRPGGEFGTRCEIKNMNSIRFIGQAIDYEARRQIAILEDGGKIDQETRLYDAVKGETRSMRSKEEAHDYRYFPDPDLLPLEFDQAYVDALAKELPELPDDKKARLITSLGLSTYDASILVSEKSVADYFEKVAAGRDGKLAANWVINDLLGQLNKVGKDIENAPVSPDQLGAIIDLIKDGTISGKIAKDLFEIVWSEGGDPRALVESRGMKQVTDTGAIEKAVDEVIAANPDKVEQARAKPTMAGWFVGQVMKATGGKANPQAVNDLVKAKLGIE.

This sequence belongs to the GatB/GatE family. GatB subfamily. In terms of assembly, heterotrimer of A, B and C subunits.

It carries out the reaction L-glutamyl-tRNA(Gln) + L-glutamine + ATP + H2O = L-glutaminyl-tRNA(Gln) + L-glutamate + ADP + phosphate + H(+). The enzyme catalyses L-aspartyl-tRNA(Asn) + L-glutamine + ATP + H2O = L-asparaginyl-tRNA(Asn) + L-glutamate + ADP + phosphate + 2 H(+). Functionally, allows the formation of correctly charged Asn-tRNA(Asn) or Gln-tRNA(Gln) through the transamidation of misacylated Asp-tRNA(Asn) or Glu-tRNA(Gln) in organisms which lack either or both of asparaginyl-tRNA or glutaminyl-tRNA synthetases. The reaction takes place in the presence of glutamine and ATP through an activated phospho-Asp-tRNA(Asn) or phospho-Glu-tRNA(Gln). The polypeptide is Aspartyl/glutamyl-tRNA(Asn/Gln) amidotransferase subunit B (Mesorhizobium japonicum (strain LMG 29417 / CECT 9101 / MAFF 303099) (Mesorhizobium loti (strain MAFF 303099))).